The following is a 185-amino-acid chain: Ribosome-recycling factor (185 aa).

It belongs to the RRF family.

The protein resides in the cytoplasm. In terms of biological role, responsible for the release of ribosomes from messenger RNA at the termination of protein biosynthesis. May increase the efficiency of translation by recycling ribosomes from one round of translation to another. In Xanthomonas euvesicatoria pv. vesicatoria (strain 85-10) (Xanthomonas campestris pv. vesicatoria), this protein is Ribosome-recycling factor.